The chain runs to 447 residues: Adenylosuccinate synthetase (447 aa).

Residues glycine 35–lysine 41 and glycine 63–threonine 65 each bind GTP. Aspartate 36 functions as the Proton acceptor in the catalytic mechanism. Mg(2+) is bound by residues aspartate 36 and glycine 63. Residues aspartate 36 to lysine 39, asparagine 61 to histidine 64, threonine 153, arginine 167, asparagine 245, threonine 260, and arginine 324 contribute to the IMP site. The Proton donor role is filled by histidine 64. Position 320–326 (valine 320–arginine 326) interacts with substrate. GTP-binding positions include arginine 326, lysine 352–aspartate 354, and glycine 435–glycine 437.

This sequence belongs to the adenylosuccinate synthetase family. As to quaternary structure, homodimer. Requires Mg(2+) as cofactor.

It is found in the cytoplasm. The enzyme catalyses IMP + L-aspartate + GTP = N(6)-(1,2-dicarboxyethyl)-AMP + GDP + phosphate + 2 H(+). The protein operates within purine metabolism; AMP biosynthesis via de novo pathway; AMP from IMP: step 1/2. Plays an important role in the de novo pathway and in the salvage pathway of purine nucleotide biosynthesis. Catalyzes the first committed step in the biosynthesis of AMP from IMP. Plays a role in the regulation of adult life span. The chain is Adenylosuccinate synthetase from Drosophila melanogaster (Fruit fly).